A 161-amino-acid chain; its full sequence is FAD synthase (161 aa).

Residues 19–20, 24–27, Asp-106, and Tyr-133 each bind ATP; these read TF and HPGH.

The protein belongs to the archaeal FAD synthase family. In terms of assembly, homodimer. A divalent metal cation serves as cofactor.

The enzyme catalyses FMN + ATP + H(+) = FAD + diphosphate. The protein operates within cofactor biosynthesis; FAD biosynthesis; FAD from FMN: step 1/1. Functionally, catalyzes the transfer of the AMP portion of ATP to flavin mononucleotide (FMN) to produce flavin adenine dinucleotide (FAD) coenzyme. This Methanothermobacter marburgensis (strain ATCC BAA-927 / DSM 2133 / JCM 14651 / NBRC 100331 / OCM 82 / Marburg) (Methanobacterium thermoautotrophicum) protein is FAD synthase.